The chain runs to 297 residues: ER membrane protein complex subunit 2-A (297 aa).

3 TPR repeats span residues histidine 87 to asparagine 120, glutamine 155 to asparagine 188, and tyrosine 192 to asparagine 225.

This sequence belongs to the EMC2 family. In terms of assembly, component of the ER membrane protein complex (EMC).

Its subcellular location is the endoplasmic reticulum membrane. Functionally, part of the endoplasmic reticulum membrane protein complex (EMC) that enables the energy-independent insertion into endoplasmic reticulum membranes of newly synthesized membrane proteins. Preferentially accommodates proteins with transmembrane domains that are weakly hydrophobic or contain destabilizing features such as charged and aromatic residues. Involved in the cotranslational insertion of multi-pass membrane proteins in which stop-transfer membrane-anchor sequences become ER membrane spanning helices. It is also required for the post-translational insertion of tail-anchored/TA proteins in endoplasmic reticulum membranes. By mediating the proper cotranslational insertion of N-terminal transmembrane domains in an N-exo topology, with translocated N-terminus in the lumen of the ER, controls the topology of multi-pass membrane proteins. By regulating the insertion of various proteins in membranes, it is indirectly involved in many cellular processes. The protein is ER membrane protein complex subunit 2-A (emc2-a) of Xenopus laevis (African clawed frog).